A 277-amino-acid polypeptide reads, in one-letter code: 2,5-diketo-D-gluconic acid reductase B (277 aa).

Y51 functions as the Proton donor in the catalytic mechanism. H109 provides a ligand contact to substrate. Residue 189 to 242 (SPLARRSELLTEQLLQELAVVYGVTPTQVVLRWHVQLGSTPIPKSADPDRQREN) coordinates NADP(+).

Belongs to the aldo/keto reductase family.

It is found in the cytoplasm. It carries out the reaction 2-dehydro-D-gluconate + NADP(+) = 2,5-didehydro-D-gluconate + NADPH + H(+). Catalyzes the reduction of 2,5-diketo-D-gluconic acid (25DKG) to 2-keto-L-gulonic acid (2KLG). 25DKGR-B has higher catalytic efficiency than 25DKGR-A. This chain is 2,5-diketo-D-gluconic acid reductase B (dkgB), found in Corynebacterium sp. (strain SHS752001).